We begin with the raw amino-acid sequence, 491 residues long: Cyclin-B1-5 (491 aa).

The 73-residue stretch at 275 to 347 (DMYSFYKEVE…VKAVPKRELQ (73 aa)) folds into the Cyclin N-terminal domain.

Belongs to the cyclin family. Cyclin AB subfamily. Expressed in roots, stems and flowers.

The protein is Cyclin-B1-5 (CYCB1-5) of Arabidopsis thaliana (Mouse-ear cress).